Reading from the N-terminus, the 281-residue chain is Probable splicing factor, arginine/serine-rich 2 (281 aa).

The region spanning 2-72 is the RRM 1 domain; it reads VRVYIGRLPN…ERVILEFPRR (71 aa). 2 stretches are compositionally biased toward basic and acidic residues: residues 78-97 and 168-190; these read EERSGSGFRGREPTFRKGGE and KLQGEDLNGRKLKCTDETRDRSR. Disordered regions lie at residues 78 to 100 and 168 to 281; these read EERSGSGFRGREPTFRKGGERQF and KLQG…SASP. The RRM 2 domain maps to 112-186; it reads FRLVIDNLST…RKLKCTDETR (75 aa). A compositionally biased stretch (basic residues) spans 191–215; that stretch reads SRSPRRRSRSRSPTRSRSPPARRRS. Residues 216–225 show a composition bias toward basic and acidic residues; the sequence is PGSDRSDRKS. Residues 245 to 254 show a composition bias toward basic residues; sequence RSRSGGRRSR.

It belongs to the splicing factor SR family. Extensively phosphorylated on serine residues in the RS domain.

The protein resides in the nucleus. Its function is as follows. Plays a functionally redundant role in spermatogenesis and growth rate control. Required for the development of somatic gonad structures and for progression from larval stage to adulthood. This is Probable splicing factor, arginine/serine-rich 2 (rsp-2) from Caenorhabditis elegans.